The primary structure comprises 134 residues: ATP synthase epsilon chain (134 aa).

It belongs to the ATPase epsilon chain family. F-type ATPases have 2 components, CF(1) - the catalytic core - and CF(0) - the membrane proton channel. CF(1) has five subunits: alpha(3), beta(3), gamma(1), delta(1), epsilon(1). CF(0) has three main subunits: a, b and c.

Its subcellular location is the cell inner membrane. Its function is as follows. Produces ATP from ADP in the presence of a proton gradient across the membrane. The sequence is that of ATP synthase epsilon chain from Rhodospirillum rubrum (strain ATCC 11170 / ATH 1.1.1 / DSM 467 / LMG 4362 / NCIMB 8255 / S1).